Consider the following 693-residue polypeptide: Exocyst complex component 7 (693 aa).

Serine 236 carries the post-translational modification Phosphoserine. The tract at residues 236 to 259 (SWGHEALRPRHSGRQTEPKKTTSA) is disordered.

Belongs to the EXO70 family. In terms of assembly, the exocyst complex is composed of Sec3/Exoc1, Sec5/Exoc2, Sec6/Exoc3, Sec8/Exoc4, Sec10/Exoc5, Sec15/Exoc6, Exo70/Exoc7 and Exo84/Exoc8.

Functionally, required for exocytosis. Thought to function in intracellular vesicle targeting and docking before SNARE complex formation. This chain is Exocyst complex component 7, found in Drosophila melanogaster (Fruit fly).